Here is a 316-residue protein sequence, read N- to C-terminus: 4-hydroxy-3-methylbut-2-enyl diphosphate reductase (316 aa).

Cys12 serves as a coordination point for [4Fe-4S] cluster. Residues His41 and His74 each contribute to the (2E)-4-hydroxy-3-methylbut-2-enyl diphosphate site. Dimethylallyl diphosphate contacts are provided by His41 and His74. Residues His41 and His74 each contribute to the isopentenyl diphosphate site. Cys96 provides a ligand contact to [4Fe-4S] cluster. Residue His124 coordinates (2E)-4-hydroxy-3-methylbut-2-enyl diphosphate. A dimethylallyl diphosphate-binding site is contributed by His124. His124 contributes to the isopentenyl diphosphate binding site. Glu126 functions as the Proton donor in the catalytic mechanism. Thr167 is a binding site for (2E)-4-hydroxy-3-methylbut-2-enyl diphosphate. Cys197 is a binding site for [4Fe-4S] cluster. Ser225, Ser226, Asn227, and Ser269 together coordinate (2E)-4-hydroxy-3-methylbut-2-enyl diphosphate. The dimethylallyl diphosphate site is built by Ser225, Ser226, Asn227, and Ser269. Isopentenyl diphosphate is bound by residues Ser225, Ser226, Asn227, and Ser269.

Belongs to the IspH family. As to quaternary structure, homodimer. The cofactor is [4Fe-4S] cluster.

It carries out the reaction isopentenyl diphosphate + 2 oxidized [2Fe-2S]-[ferredoxin] + H2O = (2E)-4-hydroxy-3-methylbut-2-enyl diphosphate + 2 reduced [2Fe-2S]-[ferredoxin] + 2 H(+). The catalysed reaction is dimethylallyl diphosphate + 2 oxidized [2Fe-2S]-[ferredoxin] + H2O = (2E)-4-hydroxy-3-methylbut-2-enyl diphosphate + 2 reduced [2Fe-2S]-[ferredoxin] + 2 H(+). The protein operates within isoprenoid biosynthesis; dimethylallyl diphosphate biosynthesis; dimethylallyl diphosphate from (2E)-4-hydroxy-3-methylbutenyl diphosphate: step 1/1. Its pathway is isoprenoid biosynthesis; isopentenyl diphosphate biosynthesis via DXP pathway; isopentenyl diphosphate from 1-deoxy-D-xylulose 5-phosphate: step 6/6. Catalyzes the conversion of 1-hydroxy-2-methyl-2-(E)-butenyl 4-diphosphate (HMBPP) into a mixture of isopentenyl diphosphate (IPP) and dimethylallyl diphosphate (DMAPP). Acts in the terminal step of the DOXP/MEP pathway for isoprenoid precursor biosynthesis. In Salmonella schwarzengrund (strain CVM19633), this protein is 4-hydroxy-3-methylbut-2-enyl diphosphate reductase.